The sequence spans 135 residues: Probable histone H2A.7 (135 aa).

The protein belongs to the histone H2A family. The nucleosome is a histone octamer containing two molecules each of H2A, H2B, H3 and H4 assembled in one H3-H4 heterotetramer and two H2A-H2B heterodimers. The octamer wraps approximately 147 bp of DNA.

The protein localises to the nucleus. The protein resides in the chromosome. Functionally, core component of nucleosome. Nucleosomes wrap and compact DNA into chromatin, limiting DNA accessibility to the cellular machineries which require DNA as a template. Histones thereby play a central role in transcription regulation, DNA repair, DNA replication and chromosomal stability. DNA accessibility is regulated via a complex set of post-translational modifications of histones, also called histone code, and nucleosome remodeling. The chain is Probable histone H2A.7 from Oryza sativa subsp. indica (Rice).